We begin with the raw amino-acid sequence, 413 residues long: DnaJ protein homolog xdj1 (413 aa).

The region spanning 6–73 is the J domain; sequence KLYDILEVHF…ESREMYDMYG (68 aa). The CR-type zinc finger occupies 134-219; it reads GKEVKLRATR…CKGSGTVPEQ (86 aa). 4 CXXCXGXG motif repeats span residues 147–154, 164–171, 191–198, and 207–214; these read CPRCQGRG, CLSCDGKG, CDTCNGKG, and CKHCKGSG. The residue at position 410 (cysteine 410) is a Cysteine methyl ester. Residue cysteine 410 is the site of S-farnesyl cysteine attachment. The propeptide at 411–413 is removed in mature form; sequence QAQ.

It localises to the endoplasmic reticulum membrane. In Schizosaccharomyces pombe (strain 972 / ATCC 24843) (Fission yeast), this protein is DnaJ protein homolog xdj1 (xdj1).